The sequence spans 247 residues: Phycocyanobilin:ferredoxin oxidoreductase (247 aa).

It belongs to the HY2 family.

The catalysed reaction is (2R,3Z)-phycocyanobilin + 4 oxidized [2Fe-2S]-[ferredoxin] = biliverdin IXalpha + 4 reduced [2Fe-2S]-[ferredoxin] + 4 H(+). Functionally, catalyzes the four-electron reduction of biliverdin IX-alpha (2-electron reduction at both the A and D rings); the reaction proceeds via an isolatable 2-electron intermediate, 181,182-dihydrobiliverdin. In Prochlorococcus marinus (strain SARG / CCMP1375 / SS120), this protein is Phycocyanobilin:ferredoxin oxidoreductase (pcyA).